The primary structure comprises 554 residues: Probable phospholipase D F09G2.8 (554 aa).

Residues 1–123 (MPLRLINFRQ…GNSRNRIIKP (123 aa)) lie on the Cytoplasmic side of the membrane. A helical; Signal-anchor for type II membrane protein membrane pass occupies residues 124–144 (ACVPISIVSLFIIALVFLPLF). The Extracellular portion of the chain corresponds to 145-554 (NEEDLASPIK…DWNSEYSKDL (410 aa)). N-linked (GlcNAc...) asparagine glycosylation is found at Asn-181, Asn-208, Asn-244, and Asn-266. Residues 272–299 (GSGIIHTKFILSDIATLYIGSANMDWKS) form the PLD phosphodiesterase 1 domain. Catalysis depends on residues His-277, Lys-279, and Asp-284. Asn-333, Asn-350, Asn-468, and Asn-513 each carry an N-linked (GlcNAc...) asparagine glycan. The PLD phosphodiesterase 2 domain occupies 492–518 (FTRVNHAKYMVTEDIAYIGTSNWSGDY).

It belongs to the phospholipase D family.

The protein localises to the membrane. It carries out the reaction a 1,2-diacyl-sn-glycero-3-phosphocholine + H2O = a 1,2-diacyl-sn-glycero-3-phosphate + choline + H(+). The chain is Probable phospholipase D F09G2.8 from Caenorhabditis elegans.